The chain runs to 402 residues: Exodeoxyribonuclease 7 large subunit (402 aa).

This sequence belongs to the XseA family. As to quaternary structure, heterooligomer composed of large and small subunits.

Its subcellular location is the cytoplasm. The enzyme catalyses Exonucleolytic cleavage in either 5'- to 3'- or 3'- to 5'-direction to yield nucleoside 5'-phosphates.. In terms of biological role, bidirectionally degrades single-stranded DNA into large acid-insoluble oligonucleotides, which are then degraded further into small acid-soluble oligonucleotides. In Streptomyces coelicolor (strain ATCC BAA-471 / A3(2) / M145), this protein is Exodeoxyribonuclease 7 large subunit.